Reading from the N-terminus, the 184-residue chain is ATP synthase subunit b, chloroplastic (184 aa).

A helical transmembrane segment spans residues 26 to 48 (ILATNLINLSVVLGVLIFFGKGV).

The protein belongs to the ATPase B chain family. F-type ATPases have 2 components, F(1) - the catalytic core - and F(0) - the membrane proton channel. F(1) has five subunits: alpha(3), beta(3), gamma(1), delta(1), epsilon(1). F(0) has four main subunits: a(1), b(1), b'(1) and c(10-14). The alpha and beta chains form an alternating ring which encloses part of the gamma chain. F(1) is attached to F(0) by a central stalk formed by the gamma and epsilon chains, while a peripheral stalk is formed by the delta, b and b' chains.

The protein resides in the plastid. It localises to the chloroplast thylakoid membrane. Functionally, f(1)F(0) ATP synthase produces ATP from ADP in the presence of a proton or sodium gradient. F-type ATPases consist of two structural domains, F(1) containing the extramembraneous catalytic core and F(0) containing the membrane proton channel, linked together by a central stalk and a peripheral stalk. During catalysis, ATP synthesis in the catalytic domain of F(1) is coupled via a rotary mechanism of the central stalk subunits to proton translocation. In terms of biological role, component of the F(0) channel, it forms part of the peripheral stalk, linking F(1) to F(0). The polypeptide is ATP synthase subunit b, chloroplastic (Calycanthus floridus var. glaucus (Eastern sweetshrub)).